The primary structure comprises 397 residues: Na(+)/H(+) antiporter NhaA (397 aa).

The next 12 membrane-spanning stretches (helical) occupy residues 14 to 34 (ASGILLLTFAMFAMLFANTPL), 36 to 56 (DLYFDFLSMPVSIQIGLFSIY), 59 to 79 (LLMWVNDGFMAVFFVLIGLEV), 95 to 115 (IFPAIGALGGMIVPALVFTLI), 125 to 145 (GWAIPMATDIAFALGVLGLLG), 154 to 174 (IFLLALAIIDDLGAIVVIAIF), 177 to 197 (HELSTTALISAAIAIAVLIIM), 204 to 224 (AICAYMVVGLILWASVLKSGV), 254 to 274 (LLAPWCSFVILPLFAFSNAGV), 292 to 312 (VALGLLVGKTLGVFSFSFLAV), 328 to 348 (IFAVSVLCGIGFTMSMFLAGL), and 365 to 385 (LGILIGSGISAVLGYYLLKLC).

This sequence belongs to the NhaA Na(+)/H(+) (TC 2.A.33) antiporter family.

It localises to the cell inner membrane. It carries out the reaction Na(+)(in) + 2 H(+)(out) = Na(+)(out) + 2 H(+)(in). Functionally, na(+)/H(+) antiporter that extrudes sodium in exchange for external protons. The chain is Na(+)/H(+) antiporter NhaA from Glaesserella parasuis serovar 5 (strain SH0165) (Haemophilus parasuis).